Consider the following 628-residue polypeptide: Serine/threonine-protein kinase Nek11 (628 aa).

The region spanning 30–288 is the Protein kinase domain; that stretch reads YVLQQKLGSG…AADILKAPYM (259 aa). ATP contacts are provided by residues 36-44 and Lys62; that span reads LGSGSFGTV. The active-site Proton acceptor is the Asp159. Ser274 is modified (phosphoserine; by CHEK1). A coiled-coil region spans residues 347–385; it reads WLRKLQAADERARRLKKIAEENYKENDKRMQALRSRNVG. Residues 452-463 show a composition bias toward acidic residues; that stretch reads SEDSEEQEEEMI. Positions 452–475 are disordered; the sequence is SEDSEEQEEEMIFSEAGGDTKEEE.

Belongs to the protein kinase superfamily. NEK Ser/Thr protein kinase family. NIMA subfamily. As to quaternary structure, interacts with NEK2. Mn(2+) is required as a cofactor. Mg(2+) serves as cofactor. Phosphorylated by NEK2. Phosphorylation at Ser-274 is important for its activation.

It is found in the nucleus. The protein resides in the nucleolus. The enzyme catalyses L-seryl-[protein] + ATP = O-phospho-L-seryl-[protein] + ADP + H(+). It catalyses the reaction L-threonyl-[protein] + ATP = O-phospho-L-threonyl-[protein] + ADP + H(+). Its activity is regulated as follows. Autorepressed by intramolecular binding of the C-terminus which dissociates following phosphorylation by NEK2. Activated in response to DNA damage. Inhibited by zinc. In terms of biological role, protein kinase which plays an important role in the G2/M checkpoint response to DNA damage. Controls degradation of CDC25A by directly phosphorylating it on residues whose phosphorylation is required for BTRC-mediated polyubiquitination and degradation. This Mus musculus (Mouse) protein is Serine/threonine-protein kinase Nek11.